The following is a 285-amino-acid chain: UPF0014 membrane protein STAR2 (285 aa).

The next 7 helical transmembrane spans lie at 30-50 (FLVGMLKPVAATAVVAMAVAL), 64-84 (YAMARAFLQLSVIGFVLQFIF), 88-108 (SAAWILLAYLFMVTVAGYTAG), 119-139 (HIAAVSILAGTSVTMALLVAL), 148-168 (YIIPVAGMMVGNAMTVTGVTM), 203-225 (SLVIALSPVIDNAKTVGLIALPG), and 240-262 (AIQLQIVVMNMLMGASTVSSILS).

Belongs to the UPF0014 family. Interacts with STAR2. Expressed in roots.

It is found in the membrane. Its function is as follows. Associates with STAR2 to form a functional transmembrane ABC transporter required for detoxification of aluminum (Al) in roots. Can specifically transport UDP-glucose. The sequence is that of UPF0014 membrane protein STAR2 from Oryza sativa subsp. japonica (Rice).